The primary structure comprises 49 residues: uncharacterized protein (49 aa).

A helical membrane pass occupies residues 17–39 (LLVFDTSLYIPPFMLSFIGYSLS).

The protein resides in the membrane. This is an uncharacterized protein from Saccharomyces cerevisiae (strain ATCC 204508 / S288c) (Baker's yeast).